Here is a 148-residue protein sequence, read N- to C-terminus: Ribonuclease pancreatic (148 aa).

The first 25 residues, 1–25 (MGLEKSLLLLPLLVLVLGCVQPSLG), serve as a signal peptide directing secretion. Residues lysine 32 and arginine 35 each coordinate substrate. The active-site Proton acceptor is the histidine 37. Intrachain disulfides connect cysteine 50–cysteine 108, cysteine 64–cysteine 119, cysteine 82–cysteine 134, and cysteine 89–cysteine 96. Substrate-binding positions include 65 to 69 (KPVNT) and lysine 90. Catalysis depends on histidine 143, which acts as the Proton donor.

It belongs to the pancreatic ribonuclease family. Monomer. Interacts with and forms tight 1:1 complexes with RNH1. Dimerization of two such complexes may occur. Interaction with RNH1 inhibits this protein. Pancreas.

Its subcellular location is the secreted. The enzyme catalyses an [RNA] containing cytidine + H2O = an [RNA]-3'-cytidine-3'-phosphate + a 5'-hydroxy-ribonucleotide-3'-[RNA].. The catalysed reaction is an [RNA] containing uridine + H2O = an [RNA]-3'-uridine-3'-phosphate + a 5'-hydroxy-ribonucleotide-3'-[RNA].. Endonuclease that catalyzes the cleavage of RNA on the 3' side of pyrimidine nucleotides. Acts on single-stranded and double-stranded RNA. The polypeptide is Ribonuclease pancreatic (RNASE1) (Gerbillus nigeriae (Nigerian gerbil)).